The primary structure comprises 157 residues: UPF0262 protein RHECIAT_CH0000657 (157 aa).

This sequence belongs to the UPF0262 family.

This Rhizobium etli (strain CIAT 652) protein is UPF0262 protein RHECIAT_CH0000657.